Reading from the N-terminus, the 518-residue chain is Serine/threonine-protein kinase UL13 (518 aa).

Disordered stretches follow at residues 1–22 and 39–120; these read MDESGRQRPASHVAADISPQGA and SRRA…PSPP. Residues 44 to 61 are compositionally biased toward low complexity; it reads GRPSGPSPRDGAVSGARP. The Protein kinase domain maps to 151 to 518; it reads PGARSFGGSG…ANPAARHSLS (368 aa). ATP contacts are provided by residues 157-165 and Lys176; that span reads GGSGGYGEV. The Proton acceptor role is filled by Asp277.

It belongs to the protein kinase superfamily. Ser/Thr protein kinase family. In terms of processing, autophosphorylated.

It is found in the virion tegument. The protein resides in the host nucleus. It catalyses the reaction L-seryl-[protein] + ATP = O-phospho-L-seryl-[protein] + ADP + H(+). It carries out the reaction L-threonyl-[protein] + ATP = O-phospho-L-threonyl-[protein] + ADP + H(+). Multifunctional serine/threonine kinase that plays a role in several processes including egress of virus particles from the nucleus, modulation of the actin cytoskeleton and regulation of viral and cellular gene expression. Regulates the nuclear localization of viral envelopment factors UL34 and UL31, by phosphorylating the US3 kinase, indicating a role in nuclear egress. Disrupts host nuclear lamins, including LMNA and LMNB1. Phosphorylates the viral Fc receptor composed of glycoproteins E (gE) and I (gI). Phosphorylation of glycoprotein E (gE) by UL13 alters its subcellular localization, from the host early endosome to the plasma membrane. Participates in the transcriptional regulation of cellular and viral mRNAs mainly by phosphorylating the viral transcriptional regulator ICP22. Additional substrates have been identified, including UL41, UL49 or host EF1D. This chain is Serine/threonine-protein kinase UL13, found in Homo sapiens (Human).